Here is a 215-residue protein sequence, read N- to C-terminus: Nascent polypeptide-associated complex subunit alpha (215 aa).

A disordered region spans residues Met-1–Lys-82. The segment covering Val-9–Glu-28 has biased composition (polar residues). Positions Ser-29–Asp-42 are enriched in acidic residues. A compositionally biased stretch (low complexity) spans Ala-44–Ala-57. The region spanning Ser-70–Ala-135 is the NAC-A/B domain. Phosphoserine is present on Ser-166. A UBA domain is found at Val-176–Leu-213.

The protein belongs to the NAC-alpha family.

Functionally, may promote appropriate targeting of ribosome-nascent polypeptide complexes. The polypeptide is Nascent polypeptide-associated complex subunit alpha (naca) (Danio rerio (Zebrafish)).